Here is a 529-residue protein sequence, read N- to C-terminus: Peptide chain release factor 3 (529 aa).

The 270-residue stretch at Ser-11–Leu-280 folds into the tr-type G domain. GTP is bound by residues Ser-20 to Thr-27, Asp-88 to His-92, and Asn-142 to Asp-145.

Belongs to the TRAFAC class translation factor GTPase superfamily. Classic translation factor GTPase family. PrfC subfamily.

The protein resides in the cytoplasm. In terms of biological role, increases the formation of ribosomal termination complexes and stimulates activities of RF-1 and RF-2. It binds guanine nucleotides and has strong preference for UGA stop codons. It may interact directly with the ribosome. The stimulation of RF-1 and RF-2 is significantly reduced by GTP and GDP, but not by GMP. The protein is Peptide chain release factor 3 of Vibrio vulnificus (strain CMCP6).